Here is a 353-residue protein sequence, read N- to C-terminus: GTPase Obg (353 aa).

The Obg domain maps to 1–159 (MKFVDEVRIH…RDLVLELKLL (159 aa)). The OBG-type G domain maps to 160 to 333 (ADVGIVGYPN…LMDAVGRALY (174 aa)). GTP is bound by residues 166 to 173 (GYPNAGKS), 191 to 195 (FTTLV), 212 to 215 (DIPG), 283 to 286 (TKID), and 314 to 316 (SAV). Ser-173 and Thr-193 together coordinate Mg(2+).

The protein belongs to the TRAFAC class OBG-HflX-like GTPase superfamily. OBG GTPase family. Monomer. The cofactor is Mg(2+).

It localises to the cytoplasm. In terms of biological role, an essential GTPase which binds GTP, GDP and possibly (p)ppGpp with moderate affinity, with high nucleotide exchange rates and a fairly low GTP hydrolysis rate. Plays a role in control of the cell cycle, stress response, ribosome biogenesis and in those bacteria that undergo differentiation, in morphogenesis control. The protein is GTPase Obg of Anaeromyxobacter sp. (strain Fw109-5).